A 544-amino-acid chain; its full sequence is Tyrosine-protein kinase fynb (544 aa).

A lipid anchor (N-myristoyl glycine) is attached at Gly2. 2 S-palmitoyl cysteine lipidation sites follow: Cys3 and Cys6. One can recognise an SH3 domain in the interval 89-150 (TGVTLFVALY…PSNYVAPVDS (62 aa)). Positions 156-253 (WYFGKLGRKD…GLCCRLVVPC (98 aa)) constitute an SH2 domain. One can recognise a Protein kinase domain in the interval 278 to 531 (LQLIKRLGNG…YLQAFLEDYF (254 aa)). ATP-binding positions include 284–292 (LGNGQFGEV) and Lys306. Residue Asp397 is the Proton acceptor of the active site. Residue Tyr427 is modified to Phosphotyrosine; by autocatalysis. Residue Tyr538 is modified to Phosphotyrosine.

Belongs to the protein kinase superfamily. Tyr protein kinase family. SRC subfamily. Requires Mn(2+) as cofactor.

It is found in the cytoplasm. It carries out the reaction L-tyrosyl-[protein] + ATP = O-phospho-L-tyrosyl-[protein] + ADP + H(+). Its activity is regulated as follows. Inhibited by phosphorylation of Tyr-538 by leukocyte common antigen and activated by dephosphorylation of this site. Functionally, tyrosine-protein kinase implicated in the control of cell growth. Plays a role in the regulation of intracellular calcium levels. Required in brain development and mature brain function with important roles in the regulation of axon growth, axon guidance, and neurite extension. Role in CNTN1-mediated signaling. The chain is Tyrosine-protein kinase fynb (fynb) from Danio rerio (Zebrafish).